A 679-amino-acid polypeptide reads, in one-letter code: Sodium-dependent phosphate transporter 1 (679 aa).

Transmembrane regions (helical) follow at residues 21 to 41 (YLWMLILGFIIAFVLAFSVGA), 62 to 82 (ACILASIFETVGSVLLGAKVS), 100 to 120 (GLLMAGSVSAMFGSAVWQLVA), 158 to 178 (IVMSWFVSPLLSGIMSGILFF), 203 to 223 (ACTVGINLFSIMYTGAPLLGF), and 230 to 250 (GTILISVGCAVFCALIVWFFV). Phosphoserine occurs at positions 265 and 269. The interval 268-288 (ESPLMEKKNSLKEDHEETKLS) is disordered. Positions 271 to 286 (LMEKKNSLKEDHEETK) are enriched in basic and acidic residues. 4 helical membrane-spanning segments follow: residues 511-531 (VSLLFQFLQILTACFGSFAHG), 558-578 (VATPIWLLLYGGVGICIGLWV), 600-620 (FSIELASALTVVIASNIGLPI), and 650-670 (IFMAWFVTVPISGVISAAIMA). The tract at residues 550–558 (DTGDVSSKV) is a.

It belongs to the inorganic phosphate transporter (PiT) (TC 2.A.20) family.

The protein localises to the cell membrane. It catalyses the reaction 2 Na(+)(out) + phosphate(out) = 2 Na(+)(in) + phosphate(in). Sodium-phosphate symporter which preferentially transports the monovalent form of phosphate with a stoichiometry of two sodium ions per phosphate ion. May play a role in extracellular matrix and cartilage calcification as well as in vascular calcification. Essential for cell proliferation but this function is independent of its phosphate transporter activity. The polypeptide is Sodium-dependent phosphate transporter 1 (SLC20A1) (Pongo abelii (Sumatran orangutan)).